The following is a 275-amino-acid chain: Dermonecrotic toxin LhSicTox-alphaVI1ii (275 aa).

His-5 is a catalytic residue. Mg(2+) is bound by residues Glu-25 and Asp-27. The active-site Nucleophile is the His-41. Disulfide bonds link Cys-45–Cys-51 and Cys-47–Cys-192. Asp-85 provides a ligand contact to Mg(2+).

It belongs to the arthropod phospholipase D family. Class II subfamily. Mg(2+) serves as cofactor. Expressed by the venom gland.

The protein localises to the secreted. It carries out the reaction an N-(acyl)-sphingosylphosphocholine = an N-(acyl)-sphingosyl-1,3-cyclic phosphate + choline. It catalyses the reaction an N-(acyl)-sphingosylphosphoethanolamine = an N-(acyl)-sphingosyl-1,3-cyclic phosphate + ethanolamine. The catalysed reaction is a 1-acyl-sn-glycero-3-phosphocholine = a 1-acyl-sn-glycero-2,3-cyclic phosphate + choline. The enzyme catalyses a 1-acyl-sn-glycero-3-phosphoethanolamine = a 1-acyl-sn-glycero-2,3-cyclic phosphate + ethanolamine. In terms of biological role, dermonecrotic toxins cleave the phosphodiester linkage between the phosphate and headgroup of certain phospholipids (sphingolipid and lysolipid substrates), forming an alcohol (often choline) and a cyclic phosphate. This toxin acts on sphingomyelin (SM). It may also act on ceramide phosphoethanolamine (CPE), lysophosphatidylcholine (LPC) and lysophosphatidylethanolamine (LPE), but not on lysophosphatidylserine (LPS), and lysophosphatidylglycerol (LPG). It acts by transphosphatidylation, releasing exclusively cyclic phosphate products as second products. Induces dermonecrosis, hemolysis, increased vascular permeability, edema, inflammatory response, and platelet aggregation. The sequence is that of Dermonecrotic toxin LhSicTox-alphaVI1ii from Loxosceles hirsuta (Recluse spider).